Reading from the N-terminus, the 722-residue chain is Probable dipeptidyl-peptidase 5 (722 aa).

The first 18 residues, 1–18 (MGALRWLSLAAAASSALA), serve as a signal peptide directing secretion. N-linked (GlcNAc...) asparagine glycosylation is found at asparagine 75, asparagine 78, asparagine 86, asparagine 94, asparagine 151, asparagine 253, and asparagine 448. The Charge relay system role is filled by serine 558. Residue asparagine 605 is glycosylated (N-linked (GlcNAc...) asparagine). Active-site charge relay system residues include aspartate 641 and histidine 673.

Belongs to the peptidase S9C family.

The protein localises to the secreted. Its function is as follows. Extracellular dipeptidyl-peptidase which removes N-terminal dipeptides sequentially from polypeptides having unsubstituted N-termini. The protein is Probable dipeptidyl-peptidase 5 (dpp5) of Emericella nidulans (strain FGSC A4 / ATCC 38163 / CBS 112.46 / NRRL 194 / M139) (Aspergillus nidulans).